A 615-amino-acid chain; its full sequence is RNA polymerase sigma factor RpoD (615 aa).

Residues 166–216 (GYIDPDDGITPPAAEVPPPVDTKTAKADDDSEDEEAEATEDEEEAESGPDP) form a disordered region. The span at 194–212 (DDSEDEEAEATEDEEEAES) shows a compositional bias: acidic residues. Residues 381-451 (MVEANLRLVI…TRSIADQART (71 aa)) form a sigma-70 factor domain-2 region. The Interaction with polymerase core subunit RpoC signature appears at 405-408 (DLIQ). The tract at residues 460–536 (ETINKLNRIS…DSTMQSPIDV (77 aa)) is sigma-70 factor domain-3. The interval 549–602 (VLSGLTAREAKVLRMRFGIDMNTDHTLEEVGKQFDVTRERIRQIEAKALRKLRH) is sigma-70 factor domain-4. The H-T-H motif DNA-binding region spans 575–594 (LEEVGKQFDVTRERIRQIEA).

Belongs to the sigma-70 factor family. RpoD/SigA subfamily. In terms of assembly, interacts transiently with the RNA polymerase catalytic core.

It localises to the cytoplasm. In terms of biological role, sigma factors are initiation factors that promote the attachment of RNA polymerase to specific initiation sites and are then released. This sigma factor is the primary sigma factor during exponential growth. The sequence is that of RNA polymerase sigma factor RpoD from Pseudomonas protegens (strain DSM 19095 / LMG 27888 / CFBP 6595 / CHA0).